The following is a 302-amino-acid chain: Protoheme IX farnesyltransferase 1 (302 aa).

8 helical membrane passes run 27 to 47 (VVALMLVTAIVGMSLAPVTDF), 49 to 69 (WIQASIGLIGIGLMAGSAAAF), 98 to 118 (SVAIFAVAIGVVGFVLLYAWV), 121 to 141 (LTAWMTFLSLLGYAVVYTMYL), 149 to 169 (IVIAGIAGAMPPLLGWTAVTG), 175 to 195 (AWLLVMIIFIWTPPHFWALAI), 228 to 248 (LLTLVCVMPVLVGMVGFIYLF), and 281 to 301 (IYHLLALFVALLADHYIGMVL).

This sequence belongs to the UbiA prenyltransferase family. Protoheme IX farnesyltransferase subfamily.

It localises to the cell inner membrane. It catalyses the reaction heme b + (2E,6E)-farnesyl diphosphate + H2O = Fe(II)-heme o + diphosphate. Its pathway is porphyrin-containing compound metabolism; heme O biosynthesis; heme O from protoheme: step 1/1. Converts heme B (protoheme IX) to heme O by substitution of the vinyl group on carbon 2 of heme B porphyrin ring with a hydroxyethyl farnesyl side group. The sequence is that of Protoheme IX farnesyltransferase 1 from Vibrio parahaemolyticus serotype O3:K6 (strain RIMD 2210633).